Reading from the N-terminus, the 184-residue chain is Elongation factor P (184 aa).

It belongs to the elongation factor P family.

It is found in the cytoplasm. It functions in the pathway protein biosynthesis; polypeptide chain elongation. Its function is as follows. Involved in peptide bond synthesis. Stimulates efficient translation and peptide-bond synthesis on native or reconstituted 70S ribosomes in vitro. Probably functions indirectly by altering the affinity of the ribosome for aminoacyl-tRNA, thus increasing their reactivity as acceptors for peptidyl transferase. The polypeptide is Elongation factor P (Leptothrix cholodnii (strain ATCC 51168 / LMG 8142 / SP-6) (Leptothrix discophora (strain SP-6))).